The chain runs to 141 residues: Large ribosomal subunit protein uL16 (141 aa).

It belongs to the universal ribosomal protein uL16 family. Part of the 50S ribosomal subunit.

Functionally, binds 23S rRNA and is also seen to make contacts with the A and possibly P site tRNAs. The chain is Large ribosomal subunit protein uL16 from Petrotoga mobilis (strain DSM 10674 / SJ95).